Consider the following 550-residue polypeptide: Glucose-6-phosphate isomerase (550 aa).

Catalysis depends on Glu-356, which acts as the Proton donor. Active-site residues include His-387 and Lys-515.

This sequence belongs to the GPI family.

The protein localises to the cytoplasm. The enzyme catalyses alpha-D-glucose 6-phosphate = beta-D-fructose 6-phosphate. It participates in carbohydrate biosynthesis; gluconeogenesis. Its pathway is carbohydrate degradation; glycolysis; D-glyceraldehyde 3-phosphate and glycerone phosphate from D-glucose: step 2/4. Catalyzes the reversible isomerization of glucose-6-phosphate to fructose-6-phosphate. The polypeptide is Glucose-6-phosphate isomerase (Aliivibrio salmonicida (strain LFI1238) (Vibrio salmonicida (strain LFI1238))).